Here is a 453-residue protein sequence, read N- to C-terminus: Folate transporter 1 (453 aa).

An N-linked (GlcNAc...) asparagine glycan is attached at asparagine 36. A run of 5 helical transmembrane segments spans residues 48-68 (PYWTYSYMLALIPMFILTDIL), 73-93 (IVMIEAIGLVATWALLVFGKG), 102-122 (VSFGVASAAEIAYYSYIYSIV), 136-156 (AAALMGKLVAFGLGQTLISTH), and 161-181 (LVLNQISLGAVCLVTIIAIFL). A glycan (N-linked (GlcNAc...) asparagine) is linked at asparagine 260. 5 consecutive transmembrane segments (helical) span residues 276-296 (VANGVVEFVNTALGAFLSLFI), 306-326 (HGQMILFITSAIVAVLLYLCS), 331-351 (VLVAYSSYVVITSIYHMLITA), 368-388 (IFGCNTFVAVCLQSLLTLVVV), and 401-421 (FVIYSGYFALVASIFAFFFMI).

The protein belongs to the reduced folate carrier (RFC) transporter (TC 2.A.48) family. As to expression, highly expressed in pharynx and posterior part of the intestine. Expressed at lower levels in the body wall muscles, head muscles, and vulva muscles. Highly expressed in the intestine of the early larva, levels decrease in the later stages of development.

It is found in the membrane. Functionally, folate transporter. This Caenorhabditis elegans protein is Folate transporter 1 (folt-1).